The sequence spans 114 residues: Fluoride-specific ion channel FluC 2 (114 aa).

The next 3 membrane-spanning stretches (helical) occupy residues 30 to 50 (FPVA…LLSG), 57 to 77 (TFAL…TFAV), and 88 to 108 (ALPS…AAWL). G67 and T70 together coordinate Na(+).

It belongs to the fluoride channel Fluc/FEX (TC 1.A.43) family.

It is found in the cell membrane. The catalysed reaction is fluoride(in) = fluoride(out). Na(+) is not transported, but it plays an essential structural role and its presence is essential for fluoride channel function. Fluoride-specific ion channel. Important for reducing fluoride concentration in the cell, thus reducing its toxicity. This Rhodococcus jostii (strain RHA1) protein is Fluoride-specific ion channel FluC 2.